The chain runs to 292 residues: Retinal homeobox protein Rx3 (292 aa).

The tract at residues 1 to 27 (MRLVGSQYKDMEDRLSPSARLVRSPGS) is disordered. Positions 32-39 (HSIESILG) match the Octapeptide motif motif. Disordered stretches follow at residues 53-72 (GSGKTGKDTEHLSPKKDSNK) and 85-107 (SPDLPDADGGKLSDDENPKKKHR). 2 stretches are compositionally biased toward basic and acidic residues: residues 57–72 (TGKDTEHLSPKKDSNK) and 92–102 (DGGKLSDDENP). A DNA-binding region (homeobox) is located at residues 106-165 (HRRNRTTFTTFQLHELERAFEKSHYPDVYSREELALKVNLPEVRVQVWFQNRRAKWRRQE). Positions 272–285 (TSIASLRMKAKEHI) match the OAR motif. The Nuclear localization signal signature appears at 278–282 (RMKAK).

Belongs to the paired homeobox family. Bicoid subfamily.

The protein resides in the nucleus. In terms of biological role, plays a critical role in eye formation by regulating the initial specification of retinal cells and/or their subsequent proliferation. The protein is Retinal homeobox protein Rx3 (rx3) of Danio rerio (Zebrafish).